A 296-amino-acid polypeptide reads, in one-letter code: Protoheme IX farnesyltransferase (296 aa).

Transmembrane regions (helical) follow at residues Pro-11–Gly-31, Tyr-35–Phe-55, Val-84–Ala-104, Leu-107–Met-127, Val-132–Ala-152, Leu-162–Phe-182, Ile-208–Ala-228, Gly-229–Ser-249, and Leu-264–Met-284.

This sequence belongs to the UbiA prenyltransferase family. Protoheme IX farnesyltransferase subfamily.

The protein localises to the cell inner membrane. The enzyme catalyses heme b + (2E,6E)-farnesyl diphosphate + H2O = Fe(II)-heme o + diphosphate. Its pathway is porphyrin-containing compound metabolism; heme O biosynthesis; heme O from protoheme: step 1/1. In terms of biological role, converts heme B (protoheme IX) to heme O by substitution of the vinyl group on carbon 2 of heme B porphyrin ring with a hydroxyethyl farnesyl side group. This is Protoheme IX farnesyltransferase from Pectobacterium atrosepticum (strain SCRI 1043 / ATCC BAA-672) (Erwinia carotovora subsp. atroseptica).